Here is a 326-residue protein sequence, read N- to C-terminus: Probable pectate lyase B (326 aa).

A signal peptide spans 1-15; that stretch reads MRVTAILTLATIAIA. Asp133, Asp162, and Asp166 together coordinate Ca(2+). The active site involves Arg219.

The protein belongs to the polysaccharide lyase 1 family. The cofactor is Ca(2+).

The protein localises to the secreted. It catalyses the reaction Eliminative cleavage of (1-&gt;4)-alpha-D-galacturonan to give oligosaccharides with 4-deoxy-alpha-D-galact-4-enuronosyl groups at their non-reducing ends.. In terms of biological role, pectinolytic enzyme consist of four classes of enzymes: pectin lyase, polygalacturonase, pectin methylesterase and rhamnogalacturonase. Among pectinolytic enzymes, pectin lyase is the most important in depolymerization of pectin, since it cleaves internal glycosidic bonds of highly methylated pectins. Favors pectate, the anion, over pectin, the methyl ester. The polypeptide is Probable pectate lyase B (plyB) (Aspergillus flavus (strain ATCC 200026 / FGSC A1120 / IAM 13836 / NRRL 3357 / JCM 12722 / SRRC 167)).